The primary structure comprises 217 residues: Uracil-DNA glycosylase (217 aa).

Aspartate 62 acts as the Proton acceptor in catalysis.

It belongs to the uracil-DNA glycosylase (UDG) superfamily. UNG family.

It localises to the cytoplasm. The enzyme catalyses Hydrolyzes single-stranded DNA or mismatched double-stranded DNA and polynucleotides, releasing free uracil.. Its function is as follows. Excises uracil residues from the DNA which can arise as a result of misincorporation of dUMP residues by DNA polymerase or due to deamination of cytosine. This chain is Uracil-DNA glycosylase, found in Streptococcus pyogenes serotype M3 (strain ATCC BAA-595 / MGAS315).